A 181-amino-acid polypeptide reads, in one-letter code: Adenine phosphoribosyltransferase 1 (181 aa).

The protein belongs to the purine/pyrimidine phosphoribosyltransferase family. In terms of assembly, homodimer.

It localises to the cytoplasm. It carries out the reaction AMP + diphosphate = 5-phospho-alpha-D-ribose 1-diphosphate + adenine. The protein operates within purine metabolism; AMP biosynthesis via salvage pathway; AMP from adenine: step 1/1. In terms of biological role, catalyzes a salvage reaction resulting in the formation of AMP, that is energically less costly than de novo synthesis. In Triticum aestivum (Wheat), this protein is Adenine phosphoribosyltransferase 1 (APT1).